The following is a 314-amino-acid chain: Ribosomal protein L11 methyltransferase (314 aa).

4 residues coordinate S-adenosyl-L-methionine: T163, G184, D206, and N248.

Belongs to the methyltransferase superfamily. PrmA family.

It localises to the cytoplasm. The enzyme catalyses L-lysyl-[protein] + 3 S-adenosyl-L-methionine = N(6),N(6),N(6)-trimethyl-L-lysyl-[protein] + 3 S-adenosyl-L-homocysteine + 3 H(+). Methylates ribosomal protein L11. The protein is Ribosomal protein L11 methyltransferase of Lactobacillus delbrueckii subsp. bulgaricus (strain ATCC 11842 / DSM 20081 / BCRC 10696 / JCM 1002 / NBRC 13953 / NCIMB 11778 / NCTC 12712 / WDCM 00102 / Lb 14).